We begin with the raw amino-acid sequence, 493 residues long: Glutamyl-tRNA(Gln) amidotransferase subunit A (493 aa).

Catalysis depends on charge relay system residues Lys79 and Ser159. Ser183 (acyl-ester intermediate) is an active-site residue.

It belongs to the amidase family. GatA subfamily. In terms of assembly, heterotrimer of A, B and C subunits.

The catalysed reaction is L-glutamyl-tRNA(Gln) + L-glutamine + ATP + H2O = L-glutaminyl-tRNA(Gln) + L-glutamate + ADP + phosphate + H(+). Allows the formation of correctly charged Gln-tRNA(Gln) through the transamidation of misacylated Glu-tRNA(Gln) in organisms which lack glutaminyl-tRNA synthetase. The reaction takes place in the presence of glutamine and ATP through an activated gamma-phospho-Glu-tRNA(Gln). This chain is Glutamyl-tRNA(Gln) amidotransferase subunit A, found in Brucella suis biovar 1 (strain 1330).